The following is a 540-amino-acid chain: Kinesin light chain (540 aa).

The stretch at Leu34 to Ile138 forms a coiled coil. TPR repeat units follow at residues Leu206 to Thr239, Ala248 to Cys281, Ala290 to Val323, Ala332 to Lys365, Ala374 to Arg407, and Thr456 to His489.

This sequence belongs to the kinesin light chain family. In terms of assembly, oligomeric complex composed of two heavy chains and two light chains. Interacts with unc-83; the interaction is direct. Interacts with unc-33; the interaction regulates unc-33 neurite localization. Interacts with casy-1.

Its subcellular location is the cytoplasm. It is found in the cytoskeleton. The protein localises to the nucleus envelope. In terms of biological role, kinesin is a microtubule-associated force-producing protein that may play a role in organelle transport. The light chain may function in coupling of cargo to the heavy chain or in the modulation of its ATPase activity. Recruits unc-83 (within the unc-83-unc-84 LINC complex) to the nuclear envelope during nuclear migration to mediate the link between the nuclear envelope and the microtubule cytoskeleton in hypodermal precursor cells. The chain is Kinesin light chain from Caenorhabditis elegans.